The following is a 379-amino-acid chain: Presenilin-associated rhomboid-like protein, mitochondrial (379 aa).

The N-terminal 52 residues, 1–52, are a transit peptide targeting the mitochondrion; the sequence is MAWRGWAQRGWGCGQAWGASVGGRSCEELTAVLTPPQLLGRRFNFFIQQKCG. At 53 to 101 the chain is on the mitochondrial matrix side; it reads FRKAPRKVEPRRSDPGTSGEAYKRSALIPPVEETVFYPSPYPIRSLIKP. Ser-65 bears the Phosphoserine mark. Residue Thr-69 is modified to Phosphothreonine. Position 70 is a phosphoserine (Ser-70). Residues 102–121 form a helical membrane-spanning segment; it reads LFFTVGFTGCAFGSAAIWQY. Residues 122–167 are Mitochondrial intermembrane-facing; it reads ESLKSRVQSYFDGIKADWLDSIRPQKEGDFRKEINKWWNNLSDGQR. A helical membrane pass occupies residues 168–187; sequence TVTGIIAANVLVFCLWRVPS. The Mitochondrial matrix portion of the chain corresponds to 188 to 207; sequence LQRTMIRYFTSNPASKVLCS. A helical membrane pass occupies residues 208–230; the sequence is PMLLSTFSHFSLFHMAANMYVLW. The Mitochondrial intermembrane portion of the chain corresponds to 231-244; the sequence is SFSSSIVNILGQEQ. Residues 245–262 traverse the membrane as a helical segment; the sequence is FMAVYLSAGVISNFVSYV. At 263–272 the chain is on the mitochondrial matrix side; it reads GKVATGRYGP. The helical transmembrane segment at 273–289 threads the bilayer; it reads SLGASGAIMTVLAAVCT. The Nucleophile role is filled by Ser-277. Residues 290–295 lie on the Mitochondrial intermembrane side of the membrane; sequence KIPEGR. The helical transmembrane segment at 296–318 threads the bilayer; sequence LAIIFLPMFTFTAGNALKAIIAM. The Mitochondrial matrix segment spans residues 319 to 332; sequence DTAGMILGWKFFDH. The helical transmembrane segment at 333–354 threads the bilayer; the sequence is AAHLGGALFGIWYVTYGHELIW. His-335 is a catalytic residue. The Mitochondrial intermembrane portion of the chain corresponds to 355-379; it reads KNREPLVKIWHEIRTNGPKKGGGSK.

The protein belongs to the peptidase S54 family. Interacts with PSEN1 and PSEN2. Binds OPA1. Post-translationally, P-beta is proteolytically processed (beta-cleavage) in a PARL-dependent manner. The cleavage is inhibited when residues Ser-65, Thr-69 and Ser-70 are all phosphorylated.

The protein resides in the mitochondrion inner membrane. It is found in the nucleus. It catalyses the reaction Cleaves type-1 transmembrane domains using a catalytic dyad composed of serine and histidine that are contributed by different transmembrane domains.. Its function is as follows. Required for the control of apoptosis during postnatal growth. Essential for proteolytic processing of an antiapoptotic form of OPA1 which prevents the release of mitochondrial cytochrome c in response to intrinsic apoptotic signals. Required for the maturation of PINK1 into its 52kDa mature form after its cleavage by mitochondrial-processing peptidase (MPP). Promotes cleavage of serine/threonine-protein phosphatase PGAM5 in damaged mitochondria in response to loss of mitochondrial membrane potential. Mediates differential cleavage of PINK1 and PGAM5 depending on the health status of mitochondria, disassociating from PINK1 and associating with PGAM5 in response to mitochondrial membrane potential loss. Required for processing of CLPB into a form with higher protein disaggregase activity by removing an autoinhibitory N-terminal peptide. Promotes processing of DIABLO/SMAC in the mitochondrion which is required for DIABLO apoptotic activity. Also required for cleavage of STARD7 and TTC19. Promotes changes in mitochondria morphology regulated by phosphorylation of P-beta domain. The protein is Presenilin-associated rhomboid-like protein, mitochondrial (PARL) of Homo sapiens (Human).